The chain runs to 314 residues: Olfactory receptor 2W3 (314 aa).

Topologically, residues 1 to 25 (MDGTNGSTQTHFILLGFSDRPHLER) are extracellular. Residue Asn-5 is glycosylated (N-linked (GlcNAc...) asparagine). A helical transmembrane segment spans residues 26 to 49 (ILFVVILIAYLLTLVGNTTIILVS). Topologically, residues 50 to 57 (RLDPHLHT) are cytoplasmic. The helical transmembrane segment at 58-79 (PMYFFLAHLSFLDLSFTTSSIP) threads the bilayer. The Extracellular portion of the chain corresponds to 80-100 (QLLYNLNGCDKTISYMGCAIQ). The helical transmembrane segment at 101 to 120 (LFLFLGLGGVECLLLAVMAY) threads the bilayer. Residues 121 to 139 (DRCVAICKPLHYMVIMNPR) lie on the Cytoplasmic side of the membrane. Residues 140 to 158 (LCRGLVSVTWGCGVANSLA) traverse the membrane as a helical segment. Residues 159–195 (MSPVTLRLPRCGHHEVDHFLREMPALIRMACVSTVAI) are Extracellular-facing. The helical transmembrane segment at 196 to 219 (EGTVFVLAVGVVLSPLVFILLSYS) threads the bilayer. At 220-236 (YIVRAVLQIRSASGRQK) the chain is on the cytoplasmic side. The chain crosses the membrane as a helical span at residues 237–259 (AFGTCGSHLTVVSLFYGNIIYMY). Residues 260-272 (MQPGASSSQDQGM) are Extracellular-facing. Residues 273–292 (FLMLFYNIVTPLLNPLIYTL) traverse the membrane as a helical segment. Topologically, residues 293–314 (RNREVKGALGRLLLGKRELGKE) are cytoplasmic.

This sequence belongs to the G-protein coupled receptor 1 family.

It is found in the cell membrane. Functionally, odorant receptor. This is Olfactory receptor 2W3 (OR2W3) from Homo sapiens (Human).